A 191-amino-acid chain; its full sequence is CASP-like protein 1D1 (191 aa).

Topologically, residues 1–22 (MTSTSKDTPESGYAVPPPNLFG) are cytoplasmic. The chain crosses the membrane as a helical span at residues 23-43 (VDFGLRLLLLASAVSALVVLV). Topologically, residues 44–73 (TSKQTESIPTSLPPPFPAFISRDAKFQHSP) are extracellular. The helical transmembrane segment at 74–94 (AFIYLLVALSVTCFYSIITMV) threads the bilayer. Residues 95–118 (ASFAAITSPSSSPRMLFHLVLSDA) are Cytoplasmic-facing. The helical transmembrane segment at 119–139 (VMAGVMASAAGTAGSVAYLGL) threads the bilayer. The Extracellular segment spans residues 140 to 160 (KGNSHVNWNKVCNVYDKFCRH). A helical transmembrane segment spans residues 161–181 (VGSSAAVSLVASVLLVSLVVL). Residues 182–191 (SSYSLYRRCR) are Cytoplasmic-facing.

Belongs to the Casparian strip membrane proteins (CASP) family. Homodimer and heterodimers.

The protein resides in the cell membrane. The polypeptide is CASP-like protein 1D1 (Musa acuminata (Banana)).